Reading from the N-terminus, the 299-residue chain is Putative hydrolase YtaP (299 aa).

This sequence belongs to the dienelactone hydrolase family.

This chain is Putative hydrolase YtaP (ytaP), found in Bacillus subtilis (strain 168).